Here is a 491-residue protein sequence, read N- to C-terminus: Ligand-gated ion channel 50 (491 aa).

The first 19 residues, 1 to 19 (MRFLLVLQLVFFYFSAATT), serve as a signal peptide directing secretion. N-linked (GlcNAc...) asparagine glycans are attached at residues Asn55 and Asn101. The cysteines at positions 157 and 171 are disulfide-linked. A run of 3 helical transmembrane segments spans residues 241–261 (LFQS…GFFF), 265–287 (SVSA…FGNV), and 302–322 (VWMI…AIVC). The N-linked (GlcNAc...) asparagine glycan is linked to Asn418. A helical membrane pass occupies residues 465–485 (MIMFPLSFLIFNVVYWSIYFM).

Belongs to the ligand-gated ion channel (TC 1.A.9) family.

It is found in the postsynaptic cell membrane. Its subcellular location is the cell membrane. This Caenorhabditis elegans protein is Ligand-gated ion channel 50 (lgc-50).